We begin with the raw amino-acid sequence, 254 residues long: uncharacterized protein (254 aa).

The next 5 membrane-spanning stretches (helical) occupy residues M33–I53, F70–S90, F92–M112, F133–I153, and F223–F243.

The protein to M.jannaschii MJ0902.

The protein localises to the cell membrane. This is an uncharacterized protein from Methanocaldococcus jannaschii (strain ATCC 43067 / DSM 2661 / JAL-1 / JCM 10045 / NBRC 100440) (Methanococcus jannaschii).